The chain runs to 691 residues: L-type lectin-domain containing receptor kinase S.6 (691 aa).

Positions 1–25 (MNHHHYSLVIFHLILFLSLDFPTLS) are cleaved as a signal peptide. Residues 26 to 311 (HRFSPPLQNL…VVGLKIPVWS (286 aa)) are Extracellular-facing. Residues 27–257 (RFSPPLQNLT…LHIVERWKFR (231 aa)) form a legume-lectin like region. Residues Asn34 and Asn89 are each glycosylated (N-linked (GlcNAc...) asparagine). A helical membrane pass occupies residues 312–332 (LLPGLAAIVILVAFIVFSLIC). Topologically, residues 333–691 (GKKRISEEAD…PWMTPKSHFS (359 aa)) are cytoplasmic. In terms of domain architecture, Protein kinase spans 366–653 (FNENAIVGQG…IRGEAPLPVL (288 aa)). Residues 372–380 (VGQGASATV) and Lys394 contribute to the ATP site. The active-site Proton acceptor is Asp500.

This sequence in the C-terminal section; belongs to the protein kinase superfamily. Ser/Thr protein kinase family. The protein in the N-terminal section; belongs to the leguminous lectin family.

Its subcellular location is the cell membrane. The enzyme catalyses L-seryl-[protein] + ATP = O-phospho-L-seryl-[protein] + ADP + H(+). The catalysed reaction is L-threonyl-[protein] + ATP = O-phospho-L-threonyl-[protein] + ADP + H(+). Its function is as follows. Involved in resistance response to the pathogenic oomycetes Phytophthora infestans and Phytophthora capsici and to the pathogenic bacteria Pseudomonas syringae. The chain is L-type lectin-domain containing receptor kinase S.6 from Arabidopsis thaliana (Mouse-ear cress).